The primary structure comprises 401 residues: MASEKPQDLMVTCTAPVNIAVIKYWGKRDEALILPINSSLSVTLHQDQLKTTTTAAISKDFTEDRIWLNGREEDVGQPRLQACLREIRRLARKRRSTGDGDALPLSLGYKVHVASVNNFPTAAGLASSAAGYACLAYTLARVYGVEGDLSEVARRGSGSACRSLYGGFVEWQMGEQADGKDSIARQIAPEWHWPQLRVLILVVSAEKKPTGSTVGMQTSVATSTLLKFRAESIVPERMKEMTRCIQEQDFQAFAQLTMKDSNQFHATCLDTFPPISYLNDTSRRIIQLVHRFNAHHGQTKVAYTFDAGPNAVIFTLEDTVAEFVAAVRHSFPPAANGDKFLKGLQVAPVLLSDELKTSLATEPSPGGVQYIIATQVGPGPQVLDDPHHHLLGPDGLPQRDL.

The residue at position 2 (Ala-2) is an N-acetylalanine. (R)-5-diphosphomevalonate contacts are provided by residues 24–27 (YWGK), Arg-79, 157–162 (SGSACR), and Thr-213. The tract at residues 382–401 (VLDDPHHHLLGPDGLPQRDL) is disordered.

This sequence belongs to the diphosphomevalonate decarboxylase family. In terms of assembly, homodimer.

The protein localises to the cytoplasm. The enzyme catalyses (R)-5-diphosphomevalonate + ATP = isopentenyl diphosphate + ADP + phosphate + CO2. It participates in steroid biosynthesis; cholesterol biosynthesis. In terms of biological role, catalyzes the ATP dependent decarboxylation of (R)-5-diphosphomevalonate to form isopentenyl diphosphate (IPP). Functions in the mevalonate (MVA) pathway leading to isopentenyl diphosphate (IPP), a key precursor for the biosynthesis of isoprenoids and sterol synthesis. This Rattus norvegicus (Rat) protein is Diphosphomevalonate decarboxylase (Mvd).